The following is a 301-amino-acid chain: Uricase (301 aa).

Active-site charge relay system residues include K11 and T58. 7 residues coordinate urate: T58, D59, F160, R177, V228, Q229, and N255. H257 acts as the Charge relay system in catalysis. A Microbody targeting signal motif is present at residues 299 to 301 (AKL).

Belongs to the uricase family.

The protein resides in the peroxisome. The enzyme catalyses urate + O2 + H2O = 5-hydroxyisourate + H2O2. It functions in the pathway purine metabolism; urate degradation; (S)-allantoin from urate: step 1/3. Its function is as follows. Catalyzes the oxidation of uric acid to 5-hydroxyisourate, which is further processed to form (S)-allantoin. The chain is Uricase (uaZ) from Emericella nidulans (strain FGSC A4 / ATCC 38163 / CBS 112.46 / NRRL 194 / M139) (Aspergillus nidulans).